The chain runs to 577 residues: Zinc finger-containing ubiquitin peptidase 1 (577 aa).

The C2H2-type 1 zinc finger occupies 2–24; it reads LSCDICGETVTSEPDRKAHLIVH. Residues 29–52 form a C2H2-type 2; atypical zinc finger; sequence IICPFCKLSGINYNEMCFHIETAH. 2 C2H2-type zinc fingers span residues 153 to 176 and 192 to 214; these read PECPFCGRIERYSQDMEIHVKTKH and YDCPMCGLVCTNYHILQEHVDLH. The segment at 225–247 is MIU; sequence DRVQCSSDRELAHQLQQEEERKR. Residues 231–261 show a composition bias toward basic and acidic residues; it reads SDRELAHQLQQEEERKRKSEESRQEREEFQK. The interval 231–262 is disordered; that stretch reads SDRELAHQLQQEEERKRKSEESRQEREEFQKL. The segment at 248–273 is zUBD/ZHA; that stretch reads KSEESRQEREEFQKLQRQYGLDNSGG. K261 is modified (N6-acetyllysine). C359 serves as the catalytic Nucleophile. H490 serves as the catalytic Proton acceptor. D511 is a catalytic residue.

Belongs to the peptidase C78 family. ZUFSP subfamily. As to quaternary structure, interacts with RPA1 and RPA2.

It is found in the cytoplasm. Its subcellular location is the nucleus. It carries out the reaction Thiol-dependent hydrolysis of ester, thioester, amide, peptide and isopeptide bonds formed by the C-terminal Gly of ubiquitin (a 76-residue protein attached to proteins as an intracellular targeting signal).. Its function is as follows. Deubiquitinase with endodeubiquitinase activity that specifically interacts with and cleaves 'Lys-63'-linked long polyubiquitin chains. Shows only weak activity against 'Lys-11' and 'Lys-48'-linked chains. Plays an important role in genome stability pathways, functioning to prevent spontaneous DNA damage and also promote cellular survival in response to exogenous DNA damage. Modulates the ubiquitination status of replication protein A (RPA) complex proteins in response to replication stress. The protein is Zinc finger-containing ubiquitin peptidase 1 of Rattus norvegicus (Rat).